Here is a 224-residue protein sequence, read N- to C-terminus: LexA repressor (224 aa).

The H-T-H motif DNA-binding region spans 38–58; the sequence is IREIGDAVGLTSTSSVAHQLR. Basic and acidic residues predominate over residues 71–82; the sequence is NRPRAVDVRGID. A disordered region spans residues 71–96; the sequence is NRPRAVDVRGIDDAGTPSATTDVIGS. Catalysis depends on for autocatalytic cleavage activity residues serine 148 and lysine 185.

Belongs to the peptidase S24 family. Homodimer.

The catalysed reaction is Hydrolysis of Ala-|-Gly bond in repressor LexA.. Represses a number of genes involved in the response to DNA damage (SOS response), including recA and lexA. In the presence of single-stranded DNA, RecA interacts with LexA causing an autocatalytic cleavage which disrupts the DNA-binding part of LexA, leading to derepression of the SOS regulon and eventually DNA repair. The sequence is that of LexA repressor from Mycobacteroides abscessus (strain ATCC 19977 / DSM 44196 / CCUG 20993 / CIP 104536 / JCM 13569 / NCTC 13031 / TMC 1543 / L948) (Mycobacterium abscessus).